Reading from the N-terminus, the 136-residue chain is Small ribosomal subunit protein uS8c (136 aa).

The protein belongs to the universal ribosomal protein uS8 family. As to quaternary structure, part of the 30S ribosomal subunit.

The protein resides in the plastid. It localises to the chloroplast. In terms of biological role, one of the primary rRNA binding proteins, it binds directly to 16S rRNA central domain where it helps coordinate assembly of the platform of the 30S subunit. This is Small ribosomal subunit protein uS8c (rps8) from Tetradesmus obliquus (Green alga).